A 351-amino-acid chain; its full sequence is Anthranilate phosphoribosyltransferase (351 aa).

5-phospho-alpha-D-ribose 1-diphosphate contacts are provided by residues Gly80, 83–84 (GD), Thr88, 90–93 (NIST), 108–116 (KHGNRSVTS), and Ser120. Gly80 serves as a coordination point for anthranilate. Residue Ser92 coordinates Mg(2+). Residue Asn111 participates in anthranilate binding. Arg166 contributes to the anthranilate binding site. Mg(2+)-binding residues include Asp229 and Glu230.

Belongs to the anthranilate phosphoribosyltransferase family. As to quaternary structure, homodimer. The cofactor is Mg(2+).

The catalysed reaction is N-(5-phospho-beta-D-ribosyl)anthranilate + diphosphate = 5-phospho-alpha-D-ribose 1-diphosphate + anthranilate. It functions in the pathway amino-acid biosynthesis; L-tryptophan biosynthesis; L-tryptophan from chorismate: step 2/5. Functionally, catalyzes the transfer of the phosphoribosyl group of 5-phosphorylribose-1-pyrophosphate (PRPP) to anthranilate to yield N-(5'-phosphoribosyl)-anthranilate (PRA). This chain is Anthranilate phosphoribosyltransferase, found in Pelodictyon phaeoclathratiforme (strain DSM 5477 / BU-1).